A 397-amino-acid polypeptide reads, in one-letter code: Chalcone synthase 2 (397 aa).

Cysteine 168 is an active-site residue.

This sequence belongs to the thiolase-like superfamily. Chalcone/stilbene synthases family.

The enzyme catalyses (E)-4-coumaroyl-CoA + 3 malonyl-CoA + 3 H(+) = 2',4,4',6'-tetrahydroxychalcone + 3 CO2 + 4 CoA. It functions in the pathway secondary metabolite biosynthesis; flavonoid biosynthesis. In terms of biological role, the primary product of this enzyme is 4,2',4',6'-tetrahydroxychalcone (also termed naringenin-chalcone or chalcone) which can under specific conditions spontaneously isomerize into naringenin. The chain is Chalcone synthase 2 (CHS2) from Daucus carota (Wild carrot).